A 276-amino-acid polypeptide reads, in one-letter code: Rhomboid protease GlpG (276 aa).

6 consecutive transmembrane segments (helical) span residues 94–114, 142–162, 169–189, 192–212, 229–249, and 250–270; these read GPVT…MSLI, IFMH…WYLG, LGSG…GYVQ, FSGP…GYVW, LIIF…GMSM, and ANGA…VDTL. Ser-201 serves as the catalytic Nucleophile. The active site involves His-254.

Belongs to the peptidase S54 family.

It localises to the cell inner membrane. The catalysed reaction is Cleaves type-1 transmembrane domains using a catalytic dyad composed of serine and histidine that are contributed by different transmembrane domains.. Functionally, rhomboid-type serine protease that catalyzes intramembrane proteolysis. In Salmonella typhi, this protein is Rhomboid protease GlpG.